The sequence spans 493 residues: Transcript termination protein A18 (493 aa).

The Helicase ATP-binding domain occupies 100–256 (MIELKRPLYI…NSIINIAKLS (157 aa)). 113-120 (LACGFGKT) serves as a coordination point for ATP. Positions 206 to 209 (DESH) match the DESH box motif.

The protein belongs to the helicase family. Poxviruses subfamily. As to quaternary structure, interacts with G2. Might be part of a transcription complex composed at least of G2, A18, and H5.

It localises to the virion. In terms of biological role, DNA helicase which seems to act as a postreplicative transcription termination factor. Involved in ATP-dependent release of nascent RNA. Forms a stable complex with single-stranded DNA, and to a lesser extent RNA. The protein is Transcript termination protein A18 of Camelus.